The primary structure comprises 344 residues: Uroporphyrinogen decarboxylase (344 aa).

Residues 26 to 30 (RQAGR), Phe45, Asp75, Tyr151, Ser206, and His320 contribute to the substrate site.

The protein belongs to the uroporphyrinogen decarboxylase family. As to quaternary structure, homodimer.

It is found in the cytoplasm. It catalyses the reaction uroporphyrinogen III + 4 H(+) = coproporphyrinogen III + 4 CO2. It participates in porphyrin-containing compound metabolism; protoporphyrin-IX biosynthesis; coproporphyrinogen-III from 5-aminolevulinate: step 4/4. Functionally, catalyzes the decarboxylation of four acetate groups of uroporphyrinogen-III to yield coproporphyrinogen-III. The chain is Uroporphyrinogen decarboxylase from Staphylococcus saprophyticus subsp. saprophyticus (strain ATCC 15305 / DSM 20229 / NCIMB 8711 / NCTC 7292 / S-41).